Consider the following 615-residue polypeptide: Putative binding protein BruAb2_0648 (615 aa).

A signal peptide spans 1 to 29 (MLNRFIAFFRSVFLIGLVATAFGALPARA).

Belongs to the bacterial solute-binding protein 5 family.

It localises to the periplasm. This is Putative binding protein BruAb2_0648 from Brucella abortus biovar 1 (strain 9-941).